Here is a 257-residue protein sequence, read N- to C-terminus: Hydroxyacylglutathione hydrolase (257 aa).

The Zn(2+) site is built by His53, His55, Asp57, His58, His109, Asp126, and His164.

It belongs to the metallo-beta-lactamase superfamily. Glyoxalase II family. In terms of assembly, monomer. Zn(2+) is required as a cofactor.

It catalyses the reaction an S-(2-hydroxyacyl)glutathione + H2O = a 2-hydroxy carboxylate + glutathione + H(+). It functions in the pathway secondary metabolite metabolism; methylglyoxal degradation; (R)-lactate from methylglyoxal: step 2/2. Thiolesterase that catalyzes the hydrolysis of S-D-lactoyl-glutathione to form glutathione and D-lactic acid. The protein is Hydroxyacylglutathione hydrolase of Baumannia cicadellinicola subsp. Homalodisca coagulata.